The primary structure comprises 320 residues: L-lactate dehydrogenase (320 aa).

NAD(+)-binding positions include Val18, Asp39, Arg44, Tyr69, and 83-84; that span reads GA. Residues Gln86 and Arg92 each coordinate substrate. Residues Ser105, 122-124, and Ser147 contribute to the NAD(+) site; that span reads AAN. 124–127 contributes to the substrate binding site; that stretch reads NPVD. Substrate is bound at residue 152–155; sequence DSSR. The Proton acceptor role is filled by His179. Position 223 is a phosphotyrosine (Tyr223). Thr232 lines the substrate pocket.

This sequence belongs to the LDH/MDH superfamily. LDH family. Homotetramer.

The protein localises to the cytoplasm. It carries out the reaction (S)-lactate + NAD(+) = pyruvate + NADH + H(+). It participates in fermentation; pyruvate fermentation to lactate; (S)-lactate from pyruvate: step 1/1. The quaternary structure is constitutionally similar to the active conformation of allosteric LDHs, and the regulation is independent of the fructose 1,6-bisphosphate-binding site. Functionally, catalyzes the conversion of lactate to pyruvate. This chain is L-lactate dehydrogenase, found in Lactiplantibacillus pentosus (Lactobacillus pentosus).